Reading from the N-terminus, the 199-residue chain is Recombination protein RecR (199 aa).

A C4-type zinc finger spans residues 57 to 72; it reads CEKCNNFTEEVVCELC. The Toprim domain occupies 80-175; it reads ALLCVVEMPA…KITRIARGLP (96 aa).

It belongs to the RecR family.

In terms of biological role, may play a role in DNA repair. It seems to be involved in an RecBC-independent recombinational process of DNA repair. It may act with RecF and RecO. This Nitrosospira multiformis (strain ATCC 25196 / NCIMB 11849 / C 71) protein is Recombination protein RecR.